An 830-amino-acid polypeptide reads, in one-letter code: Penicillin-binding protein 1A (830 aa).

Over residues 1–17 (MTERKREHKDRKQKKNS) the composition is skewed to basic residues. The interval 1–20 (MTERKREHKDRKQKKNSPKN) is disordered. At 1-30 (MTERKREHKDRKQKKNSPKNQSKVTKFLKW) the chain is on the cytoplasmic side. The chain crosses the membrane as a helical; Signal-anchor for type II membrane protein span at residues 31 to 51 (FFIGILLLGITAVTVVGIYVL). Residues 52-830 (SIIRSSPELD…QNGQNNNITQ (779 aa)) are Extracellular-facing. Residues 72 to 244 (SILYDDQGNF…PTSYDGLSEA (173 aa)) are transglycosylase. The active-site Proton donor; for transglycosylase activity is Glu111. The tract at residues 378-663 (ASATIIDYKT…TSPIFGKIMG (286 aa)) is transpeptidase. The Acyl-ester intermediate; for transpeptidase activity role is filled by Ser417. Positions 731–830 (APDTNDNNNS…QNGQNNNITQ (100 aa)) are disordered. The span at 735–746 (NDNNNSGANEGN) shows a compositional bias: low complexity. Basic and acidic residues predominate over residues 747-758 (KQQETKPEEVKP). Composition is skewed to low complexity over residues 759 to 807 (NENN…NTNN) and 816 to 830 (GNNQNQNGQNNNITQ).

It in the N-terminal section; belongs to the glycosyltransferase 51 family. In the C-terminal section; belongs to the transpeptidase family.

The protein resides in the cell membrane. The enzyme catalyses [GlcNAc-(1-&gt;4)-Mur2Ac(oyl-L-Ala-gamma-D-Glu-L-Lys-D-Ala-D-Ala)](n)-di-trans,octa-cis-undecaprenyl diphosphate + beta-D-GlcNAc-(1-&gt;4)-Mur2Ac(oyl-L-Ala-gamma-D-Glu-L-Lys-D-Ala-D-Ala)-di-trans,octa-cis-undecaprenyl diphosphate = [GlcNAc-(1-&gt;4)-Mur2Ac(oyl-L-Ala-gamma-D-Glu-L-Lys-D-Ala-D-Ala)](n+1)-di-trans,octa-cis-undecaprenyl diphosphate + di-trans,octa-cis-undecaprenyl diphosphate + H(+). The catalysed reaction is Preferential cleavage: (Ac)2-L-Lys-D-Ala-|-D-Ala. Also transpeptidation of peptidyl-alanyl moieties that are N-acyl substituents of D-alanine.. The protein operates within cell wall biogenesis; peptidoglycan biosynthesis. In terms of biological role, cell wall formation. Synthesis of cross-linked peptidoglycan from the lipid intermediates. The enzyme has a penicillin-insensitive transglycosylase N-terminal domain (formation of linear glycan strands) and a penicillin-sensitive transpeptidase C-terminal domain (cross-linking of the peptide subunits). The protein is Penicillin-binding protein 1A (pbpA) of Clostridium perfringens (strain ATCC 13124 / DSM 756 / JCM 1290 / NCIMB 6125 / NCTC 8237 / Type A).